The primary structure comprises 384 residues: MTDAAHSSQTGPVTELTKALIARPSVTPLDEGCQTLMAERLAAIGFNIEAMVFEDTTNMWARRGNTGPVFCFAGHTDVVPTGDLSRWHTPPFEPTIIDGYLYGRGAADMKGSLAAMVVATERFVAKHPNHPGSIAFLITSDEEGPFINGTTRVIDTLEARNEKITWALVGEPSSTLKLGDVVKNGRRGSLTANLTVKGVQGHVAYPHLADNPIHKAAPFLAELSQTHWDNGNAFFPPTSMQIANINGGTGASNVIPGALEVMFNFRYSTEVTAEILIERVETLLTAHELDYDIRWTFNGLPFLTGEGPLLDATRHAIRQVTGYDTDPQTTGGTSDGRFIAPTGAKVLELGPVNATIHKVNECVKVDDLEQLALCYEVILEQLLC.

His-75 contributes to the Zn(2+) binding site. Asp-77 is an active-site residue. Asp-108 lines the Zn(2+) pocket. Glu-142 acts as the Proton acceptor in catalysis. Glu-143, Glu-171, and His-357 together coordinate Zn(2+).

The protein belongs to the peptidase M20A family. DapE subfamily. As to quaternary structure, homodimer. It depends on Zn(2+) as a cofactor. The cofactor is Co(2+).

It catalyses the reaction N-succinyl-(2S,6S)-2,6-diaminopimelate + H2O = (2S,6S)-2,6-diaminopimelate + succinate. The protein operates within amino-acid biosynthesis; L-lysine biosynthesis via DAP pathway; LL-2,6-diaminopimelate from (S)-tetrahydrodipicolinate (succinylase route): step 3/3. In terms of biological role, catalyzes the hydrolysis of N-succinyl-L,L-diaminopimelic acid (SDAP), forming succinate and LL-2,6-diaminopimelate (DAP), an intermediate involved in the bacterial biosynthesis of lysine and meso-diaminopimelic acid, an essential component of bacterial cell walls. This is Succinyl-diaminopimelate desuccinylase from Shewanella oneidensis (strain ATCC 700550 / JCM 31522 / CIP 106686 / LMG 19005 / NCIMB 14063 / MR-1).